The following is a 912-amino-acid chain: Effector protein hopAE1 (912 aa).

The span at 1 to 13 (MMPSQITRSSHSS) shows a compositional bias: polar residues. Residues 1–32 (MMPSQITRSSHSSLPEVAPASGDATGVSEQTP) are disordered.

It belongs to the HopW family.

It is found in the secreted. This chain is Effector protein hopAE1 (hopAE1), found in Pseudomonas savastanoi pv. phaseolicola (strain 1448A / Race 6) (Pseudomonas syringae pv. phaseolicola (strain 1448A / Race 6)).